Reading from the N-terminus, the 303-residue chain is Tyrosine recombinase XerC (303 aa).

Residues 1 to 85 (MRADLDAFLE…ATRGLYQYLL (85 aa)) form the Core-binding (CB) domain. One can recognise a Tyr recombinase domain in the interval 106–285 (KLPRTLDADR…DFQHLASVYD (180 aa)). Residues R146, K170, H237, R240, and H263 contribute to the active site. Residue Y272 is the O-(3'-phospho-DNA)-tyrosine intermediate of the active site.

It belongs to the 'phage' integrase family. XerC subfamily. Forms a cyclic heterotetrameric complex composed of two molecules of XerC and two molecules of XerD.

It is found in the cytoplasm. Its function is as follows. Site-specific tyrosine recombinase, which acts by catalyzing the cutting and rejoining of the recombining DNA molecules. The XerC-XerD complex is essential to convert dimers of the bacterial chromosome into monomers to permit their segregation at cell division. It also contributes to the segregational stability of plasmids. The chain is Tyrosine recombinase XerC from Pseudomonas aeruginosa (strain LESB58).